A 334-amino-acid polypeptide reads, in one-letter code: ADP-L-glycero-D-manno-heptose-6-epimerase (334 aa).

Residues 11–12 (FI), 32–33 (DN), lysine 39, lysine 54, 77–81 (QGACS), and asparagine 94 each bind NADP(+). Tyrosine 141 functions as the Proton acceptor in the catalytic mechanism. Residue lysine 145 coordinates NADP(+). Asparagine 171 serves as a coordination point for substrate. Residues valine 172 and lysine 180 each contribute to the NADP(+) site. Lysine 180 (proton acceptor) is an active-site residue. Substrate is bound by residues arginine 182, histidine 189, 203–206 (FGSN), arginine 216, and tyrosine 295.

This sequence belongs to the NAD(P)-dependent epimerase/dehydratase family. HldD subfamily. In terms of assembly, homopentamer. NADP(+) is required as a cofactor.

It carries out the reaction ADP-D-glycero-beta-D-manno-heptose = ADP-L-glycero-beta-D-manno-heptose. It functions in the pathway nucleotide-sugar biosynthesis; ADP-L-glycero-beta-D-manno-heptose biosynthesis; ADP-L-glycero-beta-D-manno-heptose from D-glycero-beta-D-manno-heptose 7-phosphate: step 4/4. Its pathway is bacterial outer membrane biogenesis; LOS core biosynthesis. Functionally, catalyzes the interconversion between ADP-D-glycero-beta-D-manno-heptose and ADP-L-glycero-beta-D-manno-heptose via an epimerization at carbon 6 of the heptose. The chain is ADP-L-glycero-D-manno-heptose-6-epimerase from Neisseria gonorrhoeae.